Consider the following 341-residue polypeptide: Glycerol-3-phosphate dehydrogenase [NAD(P)+] (341 aa).

Residues Ser14, Phe15, Arg35, and Lys108 each coordinate NADPH. Sn-glycerol 3-phosphate-binding residues include Lys108 and Gly136. Position 140 (Ala140) interacts with NADPH. Lys191, Asp244, Ser254, Arg255, and Asn256 together coordinate sn-glycerol 3-phosphate. Lys191 functions as the Proton acceptor in the catalytic mechanism. Arg255 contacts NADPH. NADPH contacts are provided by Val279 and Glu281.

This sequence belongs to the NAD-dependent glycerol-3-phosphate dehydrogenase family.

The protein resides in the cytoplasm. The enzyme catalyses sn-glycerol 3-phosphate + NAD(+) = dihydroxyacetone phosphate + NADH + H(+). It carries out the reaction sn-glycerol 3-phosphate + NADP(+) = dihydroxyacetone phosphate + NADPH + H(+). Its pathway is membrane lipid metabolism; glycerophospholipid metabolism. Catalyzes the reduction of the glycolytic intermediate dihydroxyacetone phosphate (DHAP) to sn-glycerol 3-phosphate (G3P), the key precursor for phospholipid synthesis. The polypeptide is Glycerol-3-phosphate dehydrogenase [NAD(P)+] (Pseudomonas fluorescens (strain SBW25)).